Consider the following 259-residue polypeptide: Type III pantothenate kinase (259 aa).

Residue Asp-9–Lys-16 coordinates ATP. Substrate-binding positions include Tyr-93 and Gly-100 to Arg-103. Asp-102 functions as the Proton acceptor in the catalytic mechanism. Thr-126 contacts ATP. Substrate is bound at residue Thr-190.

This sequence belongs to the type III pantothenate kinase family. Homodimer. Requires NH4(+) as cofactor. It depends on K(+) as a cofactor.

The protein resides in the cytoplasm. It catalyses the reaction (R)-pantothenate + ATP = (R)-4'-phosphopantothenate + ADP + H(+). Its pathway is cofactor biosynthesis; coenzyme A biosynthesis; CoA from (R)-pantothenate: step 1/5. Functionally, catalyzes the phosphorylation of pantothenate (Pan), the first step in CoA biosynthesis. This chain is Type III pantothenate kinase, found in Burkholderia pseudomallei (strain K96243).